The primary structure comprises 139 residues: Immunogenic miracidial antigen 8I' (139 aa).

The disordered stretch occupies residues 61 to 139 (IDVGDEDYHD…PKKYGSGYKH (79 aa)). The segment covering 64–85 (GDEDYHDGDDDVDYTDDVDDVD) has biased composition (acidic residues). The segment covering 90-103 (SPSQLLQGGYQRNQ) has biased composition (polar residues).

Belongs to the immunogenic miracidial antigen family.

This is Immunogenic miracidial antigen 8I' (8I') from Schistosoma japonicum (Blood fluke).